The following is a 730-amino-acid chain: Pentatricopeptide repeat-containing protein At5g64320, mitochondrial (730 aa).

Residues 1 to 18 (MVMLARSKLALDVSRRSQ) constitute a mitochondrion transit peptide. 17 PPR repeats span residues 110 to 144 (SFDV…GIVF), 145 to 175 (KESL…MRNV), 181 to 215 (TFKS…KIPP), 216 to 250 (TLFT…GCVP), 251 to 285 (NSVI…GCVP), 286 to 320 (DAET…GFAP), 321 to 351 (DDIT…IPKP), 352 to 387 (EIVI…GIVP), 388 to 422 (DVCT…GCKP), 423 to 457 (NVYS…GLKP), 458 to 492 (NTVG…GCKP), 493 to 527 (DVYT…GVVA), 528 to 562 (NTVT…GSPL), 563 to 597 (DEIT…GHAP), 598 to 632 (SNIS…GSTP), 633 to 667 (DIVT…GIPP), and 668 to 702 (DTVT…GFVP).

This sequence belongs to the PPR family. P subfamily.

It is found in the mitochondrion. The polypeptide is Pentatricopeptide repeat-containing protein At5g64320, mitochondrial (Arabidopsis thaliana (Mouse-ear cress)).